Consider the following 142-residue polypeptide: Small ribosomal subunit protein uS12 (142 aa).

Belongs to the universal ribosomal protein uS12 family. In terms of assembly, part of the 30S ribosomal subunit.

With S4 and S5 plays an important role in translational accuracy. Located at the interface of the 30S and 50S subunits. This is Small ribosomal subunit protein uS12 from Thermoplasma volcanium (strain ATCC 51530 / DSM 4299 / JCM 9571 / NBRC 15438 / GSS1).